We begin with the raw amino-acid sequence, 606 residues long: Preterminal protein (606 aa).

Residues 320 to 329 (RLPVRRRRRR) carry the Nuclear localization signal motif. Ser-515 is modified (O-(5'-phospho-DNA)-serine). The disordered stretch occupies residues 573–606 (HLPLPERQADIPLPPLPAGPEPPLPPGARPRRRF). Residues 584-600 (PLPPLPAGPEPPLPPGA) show a composition bias toward pro residues.

Belongs to the adenoviridae terminal protein family. Heterodimer with the polymerase; this heterodimer binds to bp 9 to 18 of the genome. Interacts with host POU2F1; POU2F1 binds to the auxiliary sequences in the inverted terminal repeats and tethers the pTP-POL heterodimer to the origin DNA thereby participating in the assembly of the pre-initiation complex (POL-TP-DBP-NFIA-POU2F1). Preterminal protein is used to replicate viral genome, upon genomic encapsidation it is processed first into iTP and finally into TP by adenovirus protease.

It localises to the host nucleus matrix. In terms of biological role, protein covalently bound to the viral DNA that acts as a primer for viral genomic replication by DNA strand displacement. Assembles on the viral origin of replication in an initiation complex with viral polymerase, DBP, host NFIA and host POU2F1/OCT1. During initiation, the polymerase covalently couples the first dCTP with Ser-580 of pTP. The terminal protein stimulates the template activity over 20 fold compared to protein-free templates. Neo-synthesized viral genomes are linked to two preterminal proteins, one for each 5' end. These new genomes are encapsidated in the nucleus, and during capsid maturation by viral protease, preterminal protein is first cleaved into intermediary (iTP), then into mature TP. May play a role in host nuclear matrix localization of genomic DNA. The sequence is that of Preterminal protein from Human adenovirus A serotype 12 (HAdV-12).